The sequence spans 260 residues: uncharacterized protein (260 aa).

Residues 1-38 (MNWTREIEQYKQVVASYKLKMKRMEMKISDISEEKRQS) are a coiled coil.

This is an uncharacterized protein from Caenorhabditis elegans.